We begin with the raw amino-acid sequence, 40 residues long: Photosystem II reaction center protein J (40 aa).

The helical transmembrane segment at 8–28 threads the bilayer; it reads IPLWIIGTVTGIIVIGLIGIF.

It belongs to the PsbJ family. PSII is composed of 1 copy each of membrane proteins PsbA, PsbB, PsbC, PsbD, PsbE, PsbF, PsbH, PsbI, PsbJ, PsbK, PsbL, PsbM, PsbT, PsbX, PsbY, PsbZ, Psb30/Ycf12, at least 3 peripheral proteins of the oxygen-evolving complex and a large number of cofactors. It forms dimeric complexes.

It localises to the plastid. The protein localises to the chloroplast thylakoid membrane. One of the components of the core complex of photosystem II (PSII). PSII is a light-driven water:plastoquinone oxidoreductase that uses light energy to abstract electrons from H(2)O, generating O(2) and a proton gradient subsequently used for ATP formation. It consists of a core antenna complex that captures photons, and an electron transfer chain that converts photonic excitation into a charge separation. The chain is Photosystem II reaction center protein J from Morus indica (Mulberry).